The chain runs to 30 residues: Glucagon-like peptide (30 aa).

Arg30 bears the Arginine amide mark.

This sequence belongs to the glucagon family.

The protein localises to the secreted. The protein is Glucagon-like peptide of Anguilla anguilla (European freshwater eel).